The following is a 397-amino-acid chain: MIVKPMVRNNICLNAHPQGCKKGVEDQIEYTKKRITAEVKAGAKAPKNVLVLGCSNGYGLASRITAAFGYGAATIGVSFEKAGSETKYGTPGWYNNLAFDEAAKREGLYSVTIDGDAFSDEIKAQVIEEAKKKGIKFDLIVYSLASPVRTDPDTGIMHKSVLKPFGKTFTGKTVDPFTGELKEISAEPANDEEAAATVKVMGGEDWERWIKQLSKEGLLEEGCITLAYSYIGPEATQALYRKGTIGKAKEHLEATAHRLNKENPSIRAFVSVNKGLVTRASAVIPVIPLYLASLFKVMKEKGNHEGCIEQITRLYAERLYRKDGTIPVDEENRIRIDDWELEEDVQKAVSALMEKVTGENAESLTDLAGYRHDFLASNGFDVEGINYEAEVERFDRI.

NAD(+)-binding positions include 53-58, 79-80, 116-117, and 144-145; these read GCSNGY, FE, DA, and LA. Residue Tyr230 participates in substrate binding. Tyr240 functions as the Proton donor in the catalytic mechanism. NAD(+)-binding positions include Lys249 and 276-278; that span reads LVT.

Belongs to the TER reductase family. Monomer.

The catalysed reaction is a 2,3-saturated acyl-CoA + NAD(+) = a (2E)-enoyl-CoA + NADH + H(+). It functions in the pathway lipid metabolism; fatty acid biosynthesis. Its activity is regulated as follows. Inhibited by lauroyl-CoA. Its function is as follows. Involved in the fatty acid synthesis (FAS II). Catalyzes the reduction of the carbon-carbon double bond of crotonyl-CoA to yield butyryl-CoA. In vitro it can also use hexenoyl-CoA and dodecenoyl-CoA as substrates. In Treponema denticola (strain ATCC 35405 / DSM 14222 / CIP 103919 / JCM 8153 / KCTC 15104), this protein is Trans-2-enoyl-CoA reductase [NADH].